We begin with the raw amino-acid sequence, 305 residues long: QLNATFYSGTCPNASAIVRSTIQQAFQSDTRIGASLIRLHFHDCFVDGCDASILLDDSGSIQSEKNAGPNANSARGFNVVDNIKTALENTCPGVVSCSDILALASEASVSLTGGPSWTVLLGRRDSLTANLAGANSAIPSPFEGLSNITSKFSAVGLNTNDLVALSGAHTFGRARCGVFNNRLFNFSGTNGPDPTLNSTLLSSLQQLCPQNGSASTITNLDLSTPDAFDNNYFANLQSNNGLLQSDQELFSTLGSATIAVVTSFASNQTLFFQAFAQSMINMGNISPLTGSNGEIRLDCKKVDGS.

Gln-1 bears the Pyrrolidone carboxylic acid mark. 2 N-linked (GlcNAc...) asparagine glycosylation sites follow: Asn-3 and Asn-13. 4 disulfide bridges follow: Cys-11/Cys-91, Cys-44/Cys-49, Cys-97/Cys-299, and Cys-176/Cys-208. The Proton acceptor role is filled by His-42. Positions 43, 46, 48, 50, and 52 each coordinate Ca(2+). Residue Pro-139 coordinates substrate. The N-linked (GlcNAc...) asparagine glycan is linked to Asn-147. His-169 contributes to the heme b binding site. Residue Thr-170 coordinates Ca(2+). Residues Asn-185, Asn-197, and Asn-211 are each glycosylated (N-linked (GlcNAc...) asparagine). 3 residues coordinate Ca(2+): Asp-221, Thr-224, and Asp-229. Asn-267 carries N-linked (GlcNAc...) asparagine glycosylation.

The protein belongs to the peroxidase family. Classical plant (class III) peroxidase subfamily. Ca(2+) serves as cofactor. The cofactor is heme b.

It catalyses the reaction 2 a phenolic donor + H2O2 = 2 a phenolic radical donor + 2 H2O. Removal of H(2)O(2), oxidation of toxic reductants, biosynthesis and degradation of lignin, suberization, auxin catabolism, response to environmental stresses such as wounding, pathogen attack and oxidative stress. These functions might be dependent on each isozyme/isoform in each plant tissue. In Armoracia rusticana (Horseradish), this protein is Peroxidase A2 (HRPA2).